The sequence spans 243 residues: Terpene cyclase dpmaB (243 aa).

Transmembrane regions (helical) follow at residues 11–31 (PGYL…GLGW), 51–71 (ALMP…IYPF), 112–132 (LPFI…ALAL), 141–161 (AFSA…QLLS), 169–189 (SYFL…QDVL), and 207–227 (IWFV…LWYV).

The protein belongs to the paxB family.

Its subcellular location is the membrane. It participates in secondary metabolite biosynthesis; terpenoid biosynthesis. Functionally, terpene cyclase; part of the gene cluster that mediates the biosynthesis of the diterpenoid pyrones subglutinols A and B. The first step of the pathway is the synthesis of the alpha-pyrone moiety by the polyketide synthase dpmaA via condensation of one acetyl-CoA starter unit with 3 malonyl-CoA units and 2 methylations. The alpha-pyrone is then combined with geranylgeranyl pyrophosphate (GGPP) formed by the GGPP synthase dpmaD through the action of the prenyltransferase dpmaC to yield a linear alpha-pyrone diterpenoid. Subsequent steps in the diterpenoid pyrone biosynthetic pathway involve the decalin core formation, which is initiated by the epoxidation of the C10-C11 olefin by the FAD-dependent oxidoreductase dpmaE, and is followed by a cyclization cascade catalyzed by the terpene cyclase dpmaB. The dehydrogenase dpmaF is then involved in tetrahydrofuran (THF) ring formation at the C5 unit to complete the formation of subglutinols A and B. The chain is Terpene cyclase dpmaB from Metarhizium anisopliae (Entomophthora anisopliae).